The chain runs to 278 residues: Large ribosomal subunit protein uL2 (278 aa).

The segment covering 212–221 (NRWLGKRPHN) has biased composition (basic residues). A disordered region spans residues 212 to 278 (NRWLGKRPHN…ILSSRHNRKK (67 aa)).

It belongs to the universal ribosomal protein uL2 family. In terms of assembly, part of the 50S ribosomal subunit. Forms a bridge to the 30S subunit in the 70S ribosome.

One of the primary rRNA binding proteins. Required for association of the 30S and 50S subunits to form the 70S ribosome, for tRNA binding and peptide bond formation. It has been suggested to have peptidyltransferase activity; this is somewhat controversial. Makes several contacts with the 16S rRNA in the 70S ribosome. In Methylorubrum populi (strain ATCC BAA-705 / NCIMB 13946 / BJ001) (Methylobacterium populi), this protein is Large ribosomal subunit protein uL2.